A 91-amino-acid chain; its full sequence is Potassium channel toxin TtrKIK (91 aa).

The signal sequence occupies residues M1–A25. Positions G26 to D44 are excised as a propeptide. The BetaSPN-type CS-alpha/beta domain maps to E58–L91. 3 cysteine pairs are disulfide-bonded: C61/C81, C68/C86, and C72/C88.

Belongs to the long chain scorpion toxin family. Class 2 subfamily. As to expression, expressed by the venom gland.

The protein resides in the secreted. Its function is as follows. The full peptide presents antibacterial and cytotoxic activities. The synthetic C-terminus (AA 33-76) inhibits voltage-gated potassium channels Kv1.1/KCNA1, Kv1.2/KCNA2, and Kv1.3/KCNA3. The protein is Potassium channel toxin TtrKIK of Tityus trivittatus (Argentinean scorpion).